The chain runs to 206 residues: Oligoribonuclease (206 aa).

Residues 20 to 183 enclose the Exonuclease domain; the sequence is LVWLDMEMTG…ADIHESIDEL (164 aa). Tyr141 is an active-site residue.

It belongs to the oligoribonuclease family.

It is found in the cytoplasm. In terms of biological role, 3'-to-5' exoribonuclease specific for small oligoribonucleotides. This is Oligoribonuclease from Burkholderia lata (strain ATCC 17760 / DSM 23089 / LMG 22485 / NCIMB 9086 / R18194 / 383).